Consider the following 245-residue polypeptide: Ribonuclease 3 (245 aa).

The region spanning 24–146 (YTVFSQKLGY…IIGAIYLESG (123 aa)) is the RNase III domain. Residue Glu-59 coordinates Mg(2+). Asp-63 is a catalytic residue. Positions 132 and 135 each coordinate Mg(2+). Glu-135 is a catalytic residue. Residues 173–243 (DPKTLLQEYL…ARRAYKLAVV (71 aa)) enclose the DRBM domain.

This sequence belongs to the ribonuclease III family. Homodimer. Mg(2+) serves as cofactor.

The protein resides in the cytoplasm. The enzyme catalyses Endonucleolytic cleavage to 5'-phosphomonoester.. Functionally, digests double-stranded RNA. Involved in the processing of primary rRNA transcript to yield the immediate precursors to the large and small rRNAs (23S and 16S). Processes some mRNAs, and tRNAs when they are encoded in the rRNA operon. Processes pre-crRNA and tracrRNA of type II CRISPR loci if present in the organism. The protein is Ribonuclease 3 of Nitrosomonas eutropha (strain DSM 101675 / C91 / Nm57).